A 444-amino-acid polypeptide reads, in one-letter code: MFS-type transporter dbaD (444 aa).

Residues 1–13 are compositionally biased toward polar residues; the sequence is MTEQPPQNHSVDL. The interval 1–57 is disordered; sequence MTEQPPQNHSVDLNQNEDNNENDYRSSSATDAERPCEPKIEESTAKPPTGPPAPPPP. Asn-8 carries an N-linked (GlcNAc...) asparagine glycan. Positions 31–44 are enriched in basic and acidic residues; sequence DAERPCEPKIEEST. The span at 48-57 shows a compositional bias: pro residues; sequence PTGPPAPPPP. 11 consecutive transmembrane segments (helical) span residues 62 to 82, 107 to 127, 134 to 154, 159 to 179, 192 to 212, 223 to 243, 267 to 287, 301 to 323, 330 to 350, 356 to 376, and 394 to 414; these read LVAW…WGIM, WIGS…GSIY, ALLV…SLCK, VLLA…VPCV, TALG…PIVL, WSVR…IAVM, MAFT…LFYI, MAFY…PNAM, FNLI…LLAV, LIVI…LPPL, and MGFG…GAIL. Asn-421 is a glycosylation site (N-linked (GlcNAc...) asparagine). A helical membrane pass occupies residues 424–444; the sequence is GLWVYGGVTSLVAGFIICIAV.

It belongs to the major facilitator superfamily. Monocarboxylate porter (TC 2.A.1.13) family.

Its subcellular location is the cell membrane. Its function is as follows. MFS-type transporter; part of the gene cluster that mediates the biosynthesis of the antibiotic 2,4- dihydroxy-3-methyl-6-(2-oxopropyl)benzaldehyde (DHMBA) and its derivatives. Is probably involved in the transport of the metabolites to the environment. This chain is MFS-type transporter dbaD, found in Emericella nidulans (strain FGSC A4 / ATCC 38163 / CBS 112.46 / NRRL 194 / M139) (Aspergillus nidulans).